We begin with the raw amino-acid sequence, 1228 residues long: Clustered mitochondria protein homolog (1228 aa).

Positions 298 to 557 (PSSLPSNSID…DNNPLDVGFA (260 aa)) constitute a Clu domain. One copy of the TPR 1 repeat lies at 486–519 (CYGFDEASNKVIADAEFGSSLDDFAKVFHLKKHE). The stretch at 671-702 (LGRVIELAEQELEAQRALREAHLQQVEADNKE) forms a coiled coil. 2 TPR repeats span residues 982 to 1015 (AESY…YERV) and 1108 to 1141 (AVNE…FSKE).

Belongs to the CLU family. May associate with the eukaryotic translation initiation factor 3 (eIF-3) complex.

It is found in the cytoplasm. Functionally, mRNA-binding protein involved in proper cytoplasmic distribution of mitochondria. The sequence is that of Clustered mitochondria protein homolog from Eremothecium gossypii (strain ATCC 10895 / CBS 109.51 / FGSC 9923 / NRRL Y-1056) (Yeast).